The chain runs to 430 residues: Adenylosuccinate synthetase (430 aa).

Residues 13–19 and 41–43 each bind GTP; these read GDEGKGK and GHT. D14 serves as the catalytic Proton acceptor. The Mg(2+) site is built by D14 and G41. IMP contacts are provided by residues 14–17, 39–42, T130, R144, Q225, T240, and R304; these read DEGK and NAGH. Residue H42 is the Proton donor of the active site. A substrate-binding site is contributed by 300-306; that stretch reads STTGRAR. Residues R306, 332–334, and 414–416 each bind GTP; these read KLD and STG.

This sequence belongs to the adenylosuccinate synthetase family. As to quaternary structure, homodimer. The cofactor is Mg(2+).

It localises to the cytoplasm. The enzyme catalyses IMP + L-aspartate + GTP = N(6)-(1,2-dicarboxyethyl)-AMP + GDP + phosphate + 2 H(+). It functions in the pathway purine metabolism; AMP biosynthesis via de novo pathway; AMP from IMP: step 1/2. Its function is as follows. Plays an important role in the de novo pathway of purine nucleotide biosynthesis. Catalyzes the first committed step in the biosynthesis of AMP from IMP. The sequence is that of Adenylosuccinate synthetase from Alcanivorax borkumensis (strain ATCC 700651 / DSM 11573 / NCIMB 13689 / SK2).